We begin with the raw amino-acid sequence, 501 residues long: ADP,ATP carrier protein 3 (501 aa).

The next 12 membrane-spanning stretches (helical) occupy residues 23-43 (LKLFIPMALMMLCILFNFGAL), 59-79 (IISFLKLWLVLPSCVIFTVLY), 90-110 (YIFYIIVGSFLLFFLLFAYII), 146-166 (YALMYIFAELWSAVVINLMFW), 183-203 (PVLGMVGNIGLIIAGSVLVFF), 227-247 (IMLQPIMSIIVTAGIIAMLLF), 293-313 (IALLIICYGLLINIVEGPWKA), 326-346 (VNFMGRFNIWMGISCVTFMII), 361-381 (LLTPIMLSITGLMFFIFIIFI), 387-407 (CFGDFNLLYAAIIVGAIQNIL), 446-466 (FGKSLGAFIQSLIFIIIPTAT), and 470-490 (IIIYLLITFIVMMSLWIWNVI).

It belongs to the ADP/ATP translocase tlc family.

It localises to the cell membrane. Functionally, provides the rickettsial cell with host ATP in exchange for rickettsial ADP. This is an obligate exchange system. This energy acquiring activity is an important component of rickettsial parasitism. The polypeptide is ADP,ATP carrier protein 3 (tlcC) (Rickettsia conorii (strain ATCC VR-613 / Malish 7)).